The chain runs to 436 residues: Phosphomethylpyrimidine synthase (436 aa).

Substrate-binding positions include asparagine 69, methionine 98, tyrosine 127, histidine 163, 185 to 187 (SRG), 226 to 229 (DACR), and glutamate 265. A Zn(2+)-binding site is contributed by histidine 269. Tyrosine 292 contributes to the substrate binding site. Histidine 333 serves as a coordination point for Zn(2+). 3 residues coordinate [4Fe-4S] cluster: cysteine 409, cysteine 412, and cysteine 416.

Belongs to the ThiC family. Requires [4Fe-4S] cluster as cofactor.

It catalyses the reaction 5-amino-1-(5-phospho-beta-D-ribosyl)imidazole + S-adenosyl-L-methionine = 4-amino-2-methyl-5-(phosphooxymethyl)pyrimidine + CO + 5'-deoxyadenosine + formate + L-methionine + 3 H(+). Its pathway is cofactor biosynthesis; thiamine diphosphate biosynthesis. Functionally, catalyzes the synthesis of the hydroxymethylpyrimidine phosphate (HMP-P) moiety of thiamine from aminoimidazole ribotide (AIR) in a radical S-adenosyl-L-methionine (SAM)-dependent reaction. This is Phosphomethylpyrimidine synthase from Clostridium perfringens (strain ATCC 13124 / DSM 756 / JCM 1290 / NCIMB 6125 / NCTC 8237 / Type A).